Consider the following 351-residue polypeptide: MAVLVVFLSFLVADVFGNEFSILRSPGSVVFRNGNWPIPGERIPDVAALSMGFSVKEDLSWPGLAVGNLFHRPRATVMVMVKGVDKLALPPGSVISYPLENAVPFSLDSVANSIHSLFSEETPVVLQLAPSEERVYMVGKANSVFEDLSVTLRQLRNRLFQENSVLTSLPLNSLSRNNEVDLLFLSELQVLRDISSLLSRHKHLAKDHSPDLYSLELAGLDEIGKHYGEDSEQFRDASKILIDALQKFADDMYNLYGGNAVVELVTVRSFDTSLVRKTRNILETKQVKDPSTTYNLAYKYNFEYPVVFNLVLWIMIGLALTLIVTCYNIWNMDPGYDSIIYRMTNQKIRMD.

The signal sequence occupies residues 1-17; sequence MAVLVVFLSFLVADVFG. Over 18–303 the chain is Extracellular; that stretch reads NEFSILRSPG…YNLAYKYNFE (286 aa). Residues 304–324 form a helical membrane-spanning segment; sequence YPVVFNLVLWIMIGLALTLIV. Residues 325-351 lie on the Cytoplasmic side of the membrane; it reads TCYNIWNMDPGYDSIIYRMTNQKIRMD. The short motif at 347–351 is the Mediates retrograde transport to the ER element; that stretch reads KIRMD.

Interacts with renin. Accessory component of the multisubunit proton-transporting vacuolar (V)-ATPase protein pump. Interacts (via N-terminus) with ATP6AP1 (via N-terminus). Interacts with ATP6V0D1; ATP6V0D1 is a V-ATPase complex subunit and the interaction promotes V-ATPase complex assembly. Interacts with TMEM9; TMEM9 is a V-ATPase assembly regulator and the interaction induces the interaction with ATP6V0D1. Interacts with VMA21 (via N-terminus); VMA21 is a V-ATPase accessory component. Post-translationally, phosphorylated. Proteolytically cleaved by a furin-like convertase in the trans-Golgi network to generate N- and C-terminal fragments. In terms of tissue distribution, expressed in the brain.

The protein localises to the endoplasmic reticulum membrane. The protein resides in the lysosome membrane. Its subcellular location is the cytoplasmic vesicle. It is found in the autophagosome membrane. It localises to the cell projection. The protein localises to the dendritic spine membrane. The protein resides in the axon. Its subcellular location is the endosome membrane. It is found in the clathrin-coated vesicle membrane. It localises to the secretory vesicle. The protein localises to the synaptic vesicle membrane. Its function is as follows. Multifunctional protein which functions as a renin, prorenin cellular receptor and is involved in the assembly of the lysosomal proton-transporting V-type ATPase (V-ATPase) and the acidification of the endo-lysosomal system. May mediate renin-dependent cellular responses by activating ERK1 and ERK2. By increasing the catalytic efficiency of renin in AGT/angiotensinogen conversion to angiotensin I, may also play a role in the renin-angiotensin system (RAS). Through its function in V-type ATPase (v-ATPase) assembly and acidification of the lysosome it regulates protein degradation and may control different signaling pathways important for proper brain development, synapse morphology and synaptic transmission. In Bos taurus (Bovine), this protein is Renin receptor (ATP6AP2).